The primary structure comprises 163 residues: Large ribosomal subunit protein uL10 (163 aa).

Belongs to the universal ribosomal protein uL10 family. Part of the ribosomal stalk of the 50S ribosomal subunit. The N-terminus interacts with L11 and the large rRNA to form the base of the stalk. The C-terminus forms an elongated spine to which L12 dimers bind in a sequential fashion forming a multimeric L10(L12)X complex.

Forms part of the ribosomal stalk, playing a central role in the interaction of the ribosome with GTP-bound translation factors. The protein is Large ribosomal subunit protein uL10 of Haemophilus influenzae (strain 86-028NP).